A 765-amino-acid chain; its full sequence is Protein O-mannosyl-transferase 2 (765 aa).

The disordered stretch occupies residues 1–31 (MAASVVKTPKCPRRGSVKDVAQNAPRTAPTS). The helical transmembrane segment at 35 to 55 (ANWNWWLLLATVFLVTFATRF) threads the bilayer. 3 N-linked (GlcNAc...) asparagine glycosylation sites follow: N80, N106, and N119. 5 helical membrane-spanning segments follow: residues 128 to 148 (YFCTTLGALIMPMGFDTVYDL), 175 to 195 (ILLDPILLFFMMASVWGMVKV), 206 to 226 (GLRWWLWLFLTGTMLSCTISV), 228 to 248 (FVGLFVVLLVGLHTATELWLI), and 268 to 288 (ITLIVWPVLLYILFFYIHLSV). Residues N290 and N314 are each glycosylated (N-linked (GlcNAc...) asparagine). MIR domains are found at residues 318 to 374 (PRDV…IRPH), 384 to 440 (VQIL…VLIV), and 445 to 501 (NETV…VEDN). N445 carries an N-linked (GlcNAc...) asparagine glycan. 4 helical membrane-spanning segments follow: residues 566–586 (IYLLGNPLIWWSNLVFLALFV), 667–687 (LFLGWMLHYLPFWAMGRVLYF), 689–709 (HYFPALIFNSLLTGVMYNYIL), and 719–739 (VILGLVLSILVYSFAAFSPLA). N751 carries an N-linked (GlcNAc...) asparagine glycan.

Belongs to the glycosyltransferase 39 family. As to quaternary structure, interacts with Rt/POMT1. In terms of tissue distribution, at the cellular blastoderm stage, expression accumulates in the ventrally located mesoderm primordium. At germ band extension, mesoderm expression is seen as stripes of strong expression. A very strong signal is also detected in the invaginating gut. As the germ band retracts, mesodermal expression decays and becomes restricted to somatic muscle precursors.

It is found in the endoplasmic reticulum membrane. The enzyme catalyses a di-trans,poly-cis-dolichyl beta-D-mannosyl phosphate + L-seryl-[protein] = 3-O-(alpha-D-mannosyl)-L-seryl-[protein] + a di-trans,poly-cis-dolichyl phosphate + H(+). The catalysed reaction is a di-trans,poly-cis-dolichyl beta-D-mannosyl phosphate + L-threonyl-[protein] = 3-O-(alpha-D-mannosyl)-L-threonyl-[protein] + a di-trans,poly-cis-dolichyl phosphate + H(+). It participates in protein modification; protein glycosylation. Functionally, rt/POMT1 and tw/POMT2 function as a protein O-mannosyltransferase in association with each other to generate and maintain normal muscle development. The chain is Protein O-mannosyl-transferase 2 (tw) from Drosophila melanogaster (Fruit fly).